Consider the following 5082-residue polypeptide: Malformin synthetase mlfA (5082 aa).

Positions 225-616 (ERHAANRPHS…CGRADTQVKL (392 aa)) are adenylation 1. The Carrier 1 domain maps to 749–822 (SRLEQKIQLA…EAASLAEVQE (74 aa)). Serine 783 is subject to O-(pantetheine 4'-phosphoryl)serine. The segment at 860–1291 (ENVFPCTTMQ…ALNTLSLLQA (432 aa)) is condensation 1. An adenylation 2 region spans residues 1319 to 1708 (DRWVTRQPEG…GRKDTQVKLR (390 aa)). The region spanning 1846–1923 (TPTLELERTL…QLAAEVGEPA (78 aa)) is the Carrier 2 domain. The residue at position 1883 (serine 1883) is an O-(pantetheine 4'-phosphoryl)serine. Disordered regions lie at residues 1924 to 1953 (GQSA…DGVD) and 1986 to 2012 (GGSS…KKNA). 2 stretches are compositionally biased toward low complexity: residues 1926–1950 (SASS…STND) and 1988–2005 (SSSN…SSSS). Positions 2058–2473 (EDIYPATALQ…AVSCSDKETL (416 aa)) are condensation 2. The interval 2496 to 2888 (RRTPHAPAVC…IGRRDGQLKL (393 aa)) is adenylation 3. A Carrier 3 domain is found at 3024–3100 (RPVTSQEHEM…QLICHLNTIR (77 aa)). At serine 3061 the chain carries O-(pantetheine 4'-phosphoryl)serine. Condensation stretches follow at residues 3117–3582 (WVAL…TYDQ) and 3603–4022 (NIYP…EHLV). The interval 4047-4426 (HNSRQAVFDD…VGRKDNQIKF (380 aa)) is adenylation 4. One can recognise a Carrier 4 domain in the interval 4560–4636 (MPSTAAERKM…DLSDQAKSLI (77 aa)). At serine 4597 the chain carries O-(pantetheine 4'-phosphoryl)serine. The interval 4673–5000 (DVLPTTSFQR…LQTIVQHQNN (328 aa)) is condensation 5.

This sequence belongs to the NRP synthetase family.

It participates in secondary metabolite biosynthesis. Its function is as follows. Nonribosomal peptide synthetase; part of the gene cluster that mediates the biosynthesis of malformins, cyclic pentapeptides with a disulfide bond between 2 consecutive cysteins, that show potential anti-tumor as well as antimalarial and antitrypanosomal properties. The nonribosomal peptide synthetase mlfA is responsible of the formation of the cyclic pentapeptide. The malformin biosynthesis clusters in malformin-producing fungi also contain enzymes involved in the formation of the disulfide bond between the two consecutive cysteins within malformins, in addition to additional tailoring enzymes such as methyltransferases or oxidoreductases. They are also composed of up to 4 major facilitator superfamily transporters, and transcription factors probably involved in the regulation of the expression of those clusters. This chain is Malformin synthetase mlfA, found in Aspergillus luchuensis (strain CBS 106.47).